Reading from the N-terminus, the 387-residue chain is Phosphoglycerate kinase (387 aa).

Substrate-binding positions include 21–23 (DLN), R36, 59–62 (HLGR), R113, and R146. Residues K197, E314, and 340–343 (GGDT) each bind ATP.

Belongs to the phosphoglycerate kinase family. As to quaternary structure, monomer.

It localises to the cytoplasm. The enzyme catalyses (2R)-3-phosphoglycerate + ATP = (2R)-3-phospho-glyceroyl phosphate + ADP. The protein operates within carbohydrate degradation; glycolysis; pyruvate from D-glyceraldehyde 3-phosphate: step 2/5. This Salmonella schwarzengrund (strain CVM19633) protein is Phosphoglycerate kinase.